Here is a 334-residue protein sequence, read N- to C-terminus: 3-ketodihydrosphingosine reductase (334 aa).

Residues 1–20 (MIIYILFSLLAAVIVHLVYK) form the signal peptide. Glycine 36, serine 38, serine 39, glycine 40, arginine 62, lysine 66, aspartate 100, and isoleucine 101 together coordinate NADPH. A GXSXG motif is present at residues 36–40 (GGSSG). The active-site Proton donor is the serine 182. Tyrosine 196 serves as the catalytic Proton acceptor. Residues tyrosine 196 and lysine 200 each contribute to the NADP(+) site. The active-site Lowers pKa of active site Tyr is lysine 200.

The protein belongs to the short-chain dehydrogenases/reductases (SDR) family.

The protein localises to the endoplasmic reticulum. It catalyses the reaction sphinganine + NADP(+) = 3-oxosphinganine + NADPH + H(+). The protein operates within lipid metabolism; sphingolipid metabolism. Catalyzes the reduction of 3'-oxosphinganine (3-ketodihydrosphingosine/KDS) to sphinganine (dihydrosphingosine/DHS), the second step of de novo sphingolipid biosynthesis. This chain is 3-ketodihydrosphingosine reductase (ksrA-1), found in Dictyostelium discoideum (Social amoeba).